Here is a 204-residue protein sequence, read N- to C-terminus: Altered inheritance of mitochondria protein 20 (204 aa).

The helical transmembrane segment at 6 to 26 threads the bilayer; the sequence is VAVGTAVGIPIAVGVIIALIF.

The protein belongs to the SKG1 family.

It is found in the vacuole membrane. In terms of biological role, involved in cell cycle progression and surviving DNA damage. This Saccharomyces cerevisiae (strain RM11-1a) (Baker's yeast) protein is Altered inheritance of mitochondria protein 20 (AIM20).